The chain runs to 252 residues: Imidazole glycerol phosphate synthase subunit HisF (252 aa).

Active-site residues include Asp11 and Asp130.

Belongs to the HisA/HisF family. Heterodimer of HisH and HisF.

It localises to the cytoplasm. The enzyme catalyses 5-[(5-phospho-1-deoxy-D-ribulos-1-ylimino)methylamino]-1-(5-phospho-beta-D-ribosyl)imidazole-4-carboxamide + L-glutamine = D-erythro-1-(imidazol-4-yl)glycerol 3-phosphate + 5-amino-1-(5-phospho-beta-D-ribosyl)imidazole-4-carboxamide + L-glutamate + H(+). It functions in the pathway amino-acid biosynthesis; L-histidine biosynthesis; L-histidine from 5-phospho-alpha-D-ribose 1-diphosphate: step 5/9. Functionally, IGPS catalyzes the conversion of PRFAR and glutamine to IGP, AICAR and glutamate. The HisF subunit catalyzes the cyclization activity that produces IGP and AICAR from PRFAR using the ammonia provided by the HisH subunit. The chain is Imidazole glycerol phosphate synthase subunit HisF from Moorella thermoacetica (strain ATCC 39073 / JCM 9320).